The sequence spans 145 residues: Arginine repressor (145 aa).

The protein belongs to the ArgR family.

The protein localises to the cytoplasm. It participates in amino-acid biosynthesis; L-arginine biosynthesis [regulation]. Functionally, regulates arginine biosynthesis genes. The sequence is that of Arginine repressor from Streptococcus pyogenes serotype M3 (strain ATCC BAA-595 / MGAS315).